Reading from the N-terminus, the 325-residue chain is Thiamine-monophosphate kinase (325 aa).

Mg(2+) contacts are provided by Asp-30, Ser-45, Thr-46, and Asp-47. His-54 contributes to the substrate binding site. Positions 75 and 122 each coordinate Mg(2+). Residues 121-122 (GD) and Arg-146 each bind ATP. Asp-212 lines the Mg(2+) pocket. Ser-214 provides a ligand contact to ATP. Position 215 (Asp-215) interacts with Mg(2+). Substrate-binding residues include Glu-263 and Tyr-319.

Belongs to the thiamine-monophosphate kinase family.

The enzyme catalyses thiamine phosphate + ATP = thiamine diphosphate + ADP. It functions in the pathway cofactor biosynthesis; thiamine diphosphate biosynthesis; thiamine diphosphate from thiamine phosphate: step 1/1. Its activity is regulated as follows. Is markedly activated by the monovalent cations K(+), NH(4)(+), and Rb(+). Is significantly inhibited by ADP, AMP, p-chloromercuribenzoate, N-ethylmaleimide, pyrophosphate, and EDTA. Functionally, catalyzes the ATP-dependent phosphorylation of thiamine-monophosphate (TMP) to form thiamine-pyrophosphate (TPP), the active form of vitamin B1. Cannot use thiamine as substrate. Is highly specific for ATP as phosphate donor. The sequence is that of Thiamine-monophosphate kinase (thiL) from Escherichia coli (strain K12).